A 180-amino-acid polypeptide reads, in one-letter code: Probable chorismate pyruvate-lyase (180 aa).

Substrate contacts are provided by R73, L111, and E170.

It belongs to the UbiC family.

It is found in the cytoplasm. It carries out the reaction chorismate = 4-hydroxybenzoate + pyruvate. It participates in cofactor biosynthesis; ubiquinone biosynthesis. Its function is as follows. Removes the pyruvyl group from chorismate, with concomitant aromatization of the ring, to provide 4-hydroxybenzoate (4HB) for the ubiquinone pathway. The chain is Probable chorismate pyruvate-lyase from Nitrosospira multiformis (strain ATCC 25196 / NCIMB 11849 / C 71).